A 576-amino-acid chain; its full sequence is Plant intracellular Ras-group-related LRR protein 4 (576 aa).

Low complexity predominate over residues A130–A151. The segment at A130–V181 is disordered. Residues S160–R180 are compositionally biased toward polar residues. 11 LRR repeats span residues L272–L295, F296–L318, S320–L341, L342–L364, R366–C387, S389–L410, E411–L433, T434–A456, S458–L481, E482–N503, and K505–K527. The GVYW; degenerate motif lies at G528–Y535.

It belongs to the SHOC2 family. As to expression, widely expressed.

Functionally, leucine-rich repeat protein that likely mediates protein interactions, possibly in the context of signal transduction. In Oryza sativa subsp. japonica (Rice), this protein is Plant intracellular Ras-group-related LRR protein 4 (IRL4).